We begin with the raw amino-acid sequence, 400 residues long: Flavo-diiron protein FprA2 (400 aa).

A zinc metallo-hydrolase region spans residues 32–216 (GTSYNAYLIK…VVKGLDILDA (185 aa)). Residues H79, E81, D83, H147, D166, and H226 each contribute to the Fe cation site. Positions 257 to 397 (IPIFYCSAYG…KAFKFGEDFA (141 aa)) constitute a Flavodoxin-like domain. Residues 263–267 (SAYGN) and 345–372 (AFGS…KVFQ) each bind FMN.

This sequence in the N-terminal section; belongs to the zinc metallo-hydrolase group 3 family. As to quaternary structure, homotetramer. FMN is required as a cofactor. Requires Fe cation as cofactor.

It catalyses the reaction 2 NADH + O2 + 2 H(+) = 2 NAD(+) + 2 H2O. In terms of biological role, catalyzes the four-electron reduction of molecular oxygen to water. In fact, functions as the terminal component of an NADH oxidase (NADH:O(2) oxidoreductase) when using NADH:rubredoxin oxidoreductase (NROR) and rubredoxin (Rd) as electron transport intermediaries between NADH and FDP. Is thus able to reductively scavenge intracellular dioxygen and is part of an oxidative stress defense system in C.acetobutylicum, an obligate anaerobic bacterium. Can also serve as the terminal component of an NADH:nitric oxide oxidoreductase (NOR) with a catalytic efficiency comparable to that of its NADH oxidase activity, and therefore might have an in vivo role in scavenging nitric oxide. This chain is Flavo-diiron protein FprA2 (fprA2), found in Clostridium acetobutylicum (strain ATCC 824 / DSM 792 / JCM 1419 / IAM 19013 / LMG 5710 / NBRC 13948 / NRRL B-527 / VKM B-1787 / 2291 / W).